Here is a 376-residue protein sequence, read N- to C-terminus: MPISYNKASVVVSLQSIIANYRRIRTVAQRPMPVIKSDAYGHGLEAVGMALEAEGARECAVGTVGEGAKLRKAGFGADIVALLGALDREDAQLAASSGIIPTVLDIAGLERLAAQGTTERPVRVALKFDTGMARLGFTEHDVSALCERLRTLPSVRPVMAVSHLAVADDPTQSAFTMAQGAAFARIMAGLRSNFPDIMGSLSNSAATLAHPQLHWDVQRPGIALYGSNPLRGTALARHGEGLLPAMSVSVPVLQVHPLPAGRSISYGRTYTATKDATVAIIAAGYADNYSRALSGRGVAVAGGRRVPVLGRVCMQTTAIDVTDVPGIATGDRVWLLGGPGPATVSADELADLWGTISYEVLCLLGMNPRRHDDSVE.

Lys-36 (proton acceptor; specific for D-alanine) is an active-site residue. Lys-36 carries the N6-(pyridoxal phosphate)lysine modification. A substrate-binding site is contributed by Arg-134. The active-site Proton acceptor; specific for L-alanine is Tyr-266. Met-314 lines the substrate pocket.

It belongs to the alanine racemase family. Requires pyridoxal 5'-phosphate as cofactor.

It carries out the reaction L-alanine = D-alanine. Its pathway is amino-acid biosynthesis; D-alanine biosynthesis; D-alanine from L-alanine: step 1/1. Catalyzes the interconversion of L-alanine and D-alanine. May also act on other amino acids. The chain is Alanine racemase (alr) from Nitratidesulfovibrio vulgaris (strain DP4) (Desulfovibrio vulgaris).